Consider the following 515-residue polypeptide: Fatty acyl-CoA reductase 1 (515 aa).

The Cytoplasmic segment spans residues 1 to 465; the sequence is MVSIPEYYEG…ARKHLNKLRN (465 aa). The chain crosses the membrane as a helical span at residues 466 to 483; it reads IRYGFNTILVILIWRIFI. Over 484–515 the chain is Peroxisomal; it reads ARSQMARNIWYFVVSLCYKFLSYFRASSTMRY.

Belongs to the fatty acyl-CoA reductase family.

Its subcellular location is the peroxisome membrane. It carries out the reaction a long-chain fatty acyl-CoA + 2 NADPH + 2 H(+) = a long-chain primary fatty alcohol + 2 NADP(+) + CoA. It catalyses the reaction hexadecanoyl-CoA + 2 NADPH + 2 H(+) = hexadecan-1-ol + 2 NADP(+) + CoA. The catalysed reaction is octadecanoyl-CoA + 2 NADPH + 2 H(+) = octadecan-1-ol + 2 NADP(+) + CoA. The enzyme catalyses (9Z)-octadecenoyl-CoA + 2 NADPH + 2 H(+) = (9Z)-octadecen-1-ol + 2 NADP(+) + CoA. It carries out the reaction (9Z,12Z)-octadecadienoyl-CoA + 2 NADPH + 2 H(+) = (9Z,12Z)-octadecadien-1-ol + 2 NADP(+) + CoA. It catalyses the reaction eicosanoyl-CoA + 2 NADPH + 2 H(+) = eicosan-1-ol + 2 NADP(+) + CoA. The catalysed reaction is 16-methylheptadecanoyl-CoA + 2 NADPH + 2 H(+) = 16-methylheptadecan-1-ol + 2 NADP(+) + CoA. The enzyme catalyses 18-methylnonadecanoyl-CoA + 2 NADPH + 2 H(+) = 18-methylnonadecan-1-ol + 2 NADP(+) + CoA. Functionally, catalyzes the reduction of saturated and unsaturated C16 or C18 fatty acyl-CoA to fatty alcohols. It plays an essential role in the production of ether lipids/plasmalogens which synthesis requires fatty alcohols. In parallel, it is also required for wax monoesters production since fatty alcohols also constitute a substrate for their synthesis. The protein is Fatty acyl-CoA reductase 1 of Gallus gallus (Chicken).